Here is a 509-residue protein sequence, read N- to C-terminus: 3-octaprenyl-4-hydroxybenzoate carboxy-lyase (509 aa).

Mn(2+) is bound at residue N179. Residues 182 to 184 (IYR), 196 to 198 (RWL), and 201 to 202 (RG) contribute to the prenylated FMN site. E245 contributes to the Mn(2+) binding site. Residue D304 is the Proton donor of the active site.

This sequence belongs to the UbiD family. Homohexamer. It depends on prenylated FMN as a cofactor. Mn(2+) serves as cofactor.

It is found in the cell membrane. The enzyme catalyses a 4-hydroxy-3-(all-trans-polyprenyl)benzoate + H(+) = a 2-(all-trans-polyprenyl)phenol + CO2. It functions in the pathway cofactor biosynthesis; ubiquinone biosynthesis. Functionally, catalyzes the decarboxylation of 3-octaprenyl-4-hydroxy benzoate to 2-octaprenylphenol, an intermediate step in ubiquinone biosynthesis. The polypeptide is 3-octaprenyl-4-hydroxybenzoate carboxy-lyase (Cupriavidus pinatubonensis (strain JMP 134 / LMG 1197) (Cupriavidus necator (strain JMP 134))).